The following is a 359-amino-acid chain: Probably inactive receptor-like protein kinase At5g41680 (359 aa).

The Protein kinase domain occupies 59-357 (AASAEILGKG…KLIQDIPTNF (299 aa)). Residues 65 to 73 (LGKGAHVTT) and lysine 87 each bind ATP.

Belongs to the protein kinase superfamily. Ser/Thr protein kinase family.

The protein is Probably inactive receptor-like protein kinase At5g41680 of Arabidopsis thaliana (Mouse-ear cress).